Reading from the N-terminus, the 210-residue chain is uncharacterized protein (210 aa).

A CS domain is found at 2 to 91 (SRHPEVKWAQ…AEAKWWKKLV (90 aa)). Residues 165 to 210 (GMGGMGGMDEFEDESDDEEEVSKPQDAEKAAEAGKSQESDAKTETS) form a disordered region. The span at 173–184 (DEFEDESDDEEE) shows a compositional bias: acidic residues. The segment covering 185–210 (VSKPQDAEKAAEAGKSQESDAKTETS) has biased composition (basic and acidic residues).

This is an uncharacterized protein from Oryza sativa subsp. indica (Rice).